A 242-amino-acid polypeptide reads, in one-letter code: Phosphoribosylaminoimidazole-succinocarboxamide synthase (242 aa).

It belongs to the SAICAR synthetase family.

The catalysed reaction is 5-amino-1-(5-phospho-D-ribosyl)imidazole-4-carboxylate + L-aspartate + ATP = (2S)-2-[5-amino-1-(5-phospho-beta-D-ribosyl)imidazole-4-carboxamido]succinate + ADP + phosphate + 2 H(+). It functions in the pathway purine metabolism; IMP biosynthesis via de novo pathway; 5-amino-1-(5-phospho-D-ribosyl)imidazole-4-carboxamide from 5-amino-1-(5-phospho-D-ribosyl)imidazole-4-carboxylate: step 1/2. The sequence is that of Phosphoribosylaminoimidazole-succinocarboxamide synthase (purC) from Methanocaldococcus jannaschii (strain ATCC 43067 / DSM 2661 / JAL-1 / JCM 10045 / NBRC 100440) (Methanococcus jannaschii).